Here is a 426-residue protein sequence, read N- to C-terminus: UDP-N-acetylglucosamine--N-acetylmuramyl-(pentapeptide) pyrophosphoryl-undecaprenol N-acetylglucosamine transferase (426 aa).

Residues 28 to 30 (TGG), Asn140, Arg176, Ser204, Ile257, and Gln302 contribute to the UDP-N-acetyl-alpha-D-glucosamine site. Residues 369-388 (AGNGPSGMGNGHSSEQPQER) are disordered.

This sequence belongs to the glycosyltransferase 28 family. MurG subfamily.

The protein localises to the cell inner membrane. The catalysed reaction is di-trans,octa-cis-undecaprenyl diphospho-N-acetyl-alpha-D-muramoyl-L-alanyl-D-glutamyl-meso-2,6-diaminopimeloyl-D-alanyl-D-alanine + UDP-N-acetyl-alpha-D-glucosamine = di-trans,octa-cis-undecaprenyl diphospho-[N-acetyl-alpha-D-glucosaminyl-(1-&gt;4)]-N-acetyl-alpha-D-muramoyl-L-alanyl-D-glutamyl-meso-2,6-diaminopimeloyl-D-alanyl-D-alanine + UDP + H(+). Its pathway is cell wall biogenesis; peptidoglycan biosynthesis. Its function is as follows. Cell wall formation. Catalyzes the transfer of a GlcNAc subunit on undecaprenyl-pyrophosphoryl-MurNAc-pentapeptide (lipid intermediate I) to form undecaprenyl-pyrophosphoryl-MurNAc-(pentapeptide)GlcNAc (lipid intermediate II). The protein is UDP-N-acetylglucosamine--N-acetylmuramyl-(pentapeptide) pyrophosphoryl-undecaprenol N-acetylglucosamine transferase of Xanthomonas axonopodis pv. citri (strain 306).